The chain runs to 202 residues: Glycerol-3-phosphate acyltransferase (202 aa).

A run of 6 helical transmembrane segments spans residues 2–22 (MIVI…GYVI), 54–74 (FLVT…PLWL), 88–108 (NGLI…YLGF), 120–140 (VILG…FGIL), 141–161 (YLTK…VIGA), and 162–182 (LLIR…LLII).

Belongs to the PlsY family. Probably interacts with PlsX.

The protein resides in the cell membrane. The enzyme catalyses an acyl phosphate + sn-glycerol 3-phosphate = a 1-acyl-sn-glycero-3-phosphate + phosphate. The protein operates within lipid metabolism; phospholipid metabolism. Its function is as follows. Catalyzes the transfer of an acyl group from acyl-phosphate (acyl-PO(4)) to glycerol-3-phosphate (G3P) to form lysophosphatidic acid (LPA). This enzyme utilizes acyl-phosphate as fatty acyl donor, but not acyl-CoA or acyl-ACP. This Staphylococcus saprophyticus subsp. saprophyticus (strain ATCC 15305 / DSM 20229 / NCIMB 8711 / NCTC 7292 / S-41) protein is Glycerol-3-phosphate acyltransferase.